A 508-amino-acid polypeptide reads, in one-letter code: Bifunctional purine biosynthesis protein PurH (508 aa).

The 144-residue stretch at 1–144 (MTRALLSVSD…KNFASVLPIV (144 aa)) folds into the MGS-like domain.

Belongs to the PurH family.

The enzyme catalyses (6R)-10-formyltetrahydrofolate + 5-amino-1-(5-phospho-beta-D-ribosyl)imidazole-4-carboxamide = 5-formamido-1-(5-phospho-D-ribosyl)imidazole-4-carboxamide + (6S)-5,6,7,8-tetrahydrofolate. The catalysed reaction is IMP + H2O = 5-formamido-1-(5-phospho-D-ribosyl)imidazole-4-carboxamide. The protein operates within purine metabolism; IMP biosynthesis via de novo pathway; 5-formamido-1-(5-phospho-D-ribosyl)imidazole-4-carboxamide from 5-amino-1-(5-phospho-D-ribosyl)imidazole-4-carboxamide (10-formyl THF route): step 1/1. It functions in the pathway purine metabolism; IMP biosynthesis via de novo pathway; IMP from 5-formamido-1-(5-phospho-D-ribosyl)imidazole-4-carboxamide: step 1/1. The sequence is that of Bifunctional purine biosynthesis protein PurH from Leuconostoc mesenteroides subsp. mesenteroides (strain ATCC 8293 / DSM 20343 / BCRC 11652 / CCM 1803 / JCM 6124 / NCDO 523 / NBRC 100496 / NCIMB 8023 / NCTC 12954 / NRRL B-1118 / 37Y).